The primary structure comprises 511 residues: 2-isopropylmalate synthase (511 aa).

Residues 6 to 269 (IIIFDTTLRD…YTDIKCENIF (264 aa)) form the Pyruvate carboxyltransferase domain. Mn(2+) contacts are provided by Asp-15, His-203, His-205, and Asn-239. The segment at 394–511 (VLEKLSVISG…SLKVEERKMA (118 aa)) is regulatory domain.

Belongs to the alpha-IPM synthase/homocitrate synthase family. LeuA type 1 subfamily. As to quaternary structure, homodimer. Mn(2+) serves as cofactor.

It is found in the cytoplasm. It carries out the reaction 3-methyl-2-oxobutanoate + acetyl-CoA + H2O = (2S)-2-isopropylmalate + CoA + H(+). It functions in the pathway amino-acid biosynthesis; L-leucine biosynthesis; L-leucine from 3-methyl-2-oxobutanoate: step 1/4. Catalyzes the condensation of the acetyl group of acetyl-CoA with 3-methyl-2-oxobutanoate (2-ketoisovalerate) to form 3-carboxy-3-hydroxy-4-methylpentanoate (2-isopropylmalate). The polypeptide is 2-isopropylmalate synthase (Campylobacter jejuni subsp. jejuni serotype O:2 (strain ATCC 700819 / NCTC 11168)).